The chain runs to 205 residues: Probable GTP-binding protein EngB (205 aa).

The region spanning 27–201 (SGIEIAFAGR…AAKLDSWFAP (175 aa)) is the EngB-type G domain. GTP contacts are provided by residues 35–42 (GRSNAGKS), 62–66 (GRTQL), 80–83 (DLPG), 147–150 (TKAD), and 180–182 (FSA). Mg(2+) is bound by residues S42 and T64.

This sequence belongs to the TRAFAC class TrmE-Era-EngA-EngB-Septin-like GTPase superfamily. EngB GTPase family. Mg(2+) serves as cofactor.

Necessary for normal cell division and for the maintenance of normal septation. This Pasteurella multocida (strain Pm70) protein is Probable GTP-binding protein EngB.